Consider the following 92-residue polypeptide: Long neurotoxin 2 (92 aa).

A signal peptide spans methionine 1–threonine 21. 5 cysteine pairs are disulfide-bonded: cysteine 24-cysteine 42, cysteine 35-cysteine 63, cysteine 48-cysteine 52, cysteine 67-cysteine 79, and cysteine 80-cysteine 85.

It belongs to the three-finger toxin family. Long-chain subfamily. Type II alpha-neurotoxin sub-subfamily. Expressed by the venom gland.

It localises to the secreted. Binds with high affinity to muscular (alpha-1/CHRNA1) and neuronal (alpha-7/CHRNA7) nicotinic acetylcholine receptor (nAChR) and inhibits acetylcholine from binding to the receptor, thereby impairing neuromuscular and neuronal transmission. The sequence is that of Long neurotoxin 2 from Oxyuranus microlepidotus (Inland taipan).